The chain runs to 226 residues: Cytidylate kinase (226 aa).

ATP is bound at residue 10–18 (GPASSGKST).

It belongs to the cytidylate kinase family. Type 1 subfamily.

Its subcellular location is the cytoplasm. It catalyses the reaction CMP + ATP = CDP + ADP. It carries out the reaction dCMP + ATP = dCDP + ADP. The polypeptide is Cytidylate kinase (Streptococcus thermophilus (strain CNRZ 1066)).